Here is a 201-residue protein sequence, read N- to C-terminus: Endoribonuclease YbeY (201 aa).

Residues His120, His124, and His130 each contribute to the Zn(2+) site. Positions 151–201 are disordered; the sequence is DGADGADGADGARGAADGAADGGEGRRGDQGRRGDQGRGGGAGEPPAAPAR. The segment covering 173–186 has biased composition (basic and acidic residues); that stretch reads GEGRRGDQGRRGDQ.

It belongs to the endoribonuclease YbeY family. It depends on Zn(2+) as a cofactor.

It is found in the cytoplasm. In terms of biological role, single strand-specific metallo-endoribonuclease involved in late-stage 70S ribosome quality control and in maturation of the 3' terminus of the 16S rRNA. The sequence is that of Endoribonuclease YbeY from Frankia casuarinae (strain DSM 45818 / CECT 9043 / HFP020203 / CcI3).